The sequence spans 302 residues: ATP synthase gamma chain (302 aa).

It belongs to the ATPase gamma chain family. F-type ATPases have 2 components, CF(1) - the catalytic core - and CF(0) - the membrane proton channel. CF(1) has five subunits: alpha(3), beta(3), gamma(1), delta(1), epsilon(1). CF(0) has three main subunits: a, b and c.

It localises to the cell membrane. Functionally, produces ATP from ADP in the presence of a proton gradient across the membrane. The gamma chain is believed to be important in regulating ATPase activity and the flow of protons through the CF(0) complex. In Kineococcus radiotolerans (strain ATCC BAA-149 / DSM 14245 / SRS30216), this protein is ATP synthase gamma chain.